The sequence spans 203 residues: Small ribosomal subunit protein uS5 (203 aa).

Positions 1–18 are enriched in basic and acidic residues; it reads MENNVKKETIVDSEKVEK. The segment at 1–36 is disordered; sequence MENNVKKETIVDSEKVEKQQPVTAPVVNKKENTQPK. One can recognise an S5 DRBM domain in the interval 49 to 112; it reads FEERVVKIKR…KNANNNLIKV (64 aa).

Belongs to the universal ribosomal protein uS5 family. In terms of assembly, part of the 30S ribosomal subunit. Contacts proteins S4 and S8.

With S4 and S12 plays an important role in translational accuracy. Its function is as follows. Located at the back of the 30S subunit body where it stabilizes the conformation of the head with respect to the body. This chain is Small ribosomal subunit protein uS5, found in Ureaplasma urealyticum serovar 10 (strain ATCC 33699 / Western).